We begin with the raw amino-acid sequence, 194 residues long: Peptidyl-tRNA hydrolase (194 aa).

Tyrosine 17 is a binding site for tRNA. Catalysis depends on histidine 22, which acts as the Proton acceptor. Tyrosine 69, asparagine 71, and asparagine 117 together coordinate tRNA.

Belongs to the PTH family. Monomer.

Its subcellular location is the cytoplasm. The catalysed reaction is an N-acyl-L-alpha-aminoacyl-tRNA + H2O = an N-acyl-L-amino acid + a tRNA + H(+). Hydrolyzes ribosome-free peptidyl-tRNAs (with 1 or more amino acids incorporated), which drop off the ribosome during protein synthesis, or as a result of ribosome stalling. Its function is as follows. Catalyzes the release of premature peptidyl moieties from peptidyl-tRNA molecules trapped in stalled 50S ribosomal subunits, and thus maintains levels of free tRNAs and 50S ribosomes. This chain is Peptidyl-tRNA hydrolase, found in Arthrobacter sp. (strain FB24).